We begin with the raw amino-acid sequence, 505 residues long: Trans-cinnamate 4-monooxygenase (505 aa).

A helical transmembrane segment spans residues 3–23 (LLLIEKTLVALFAAIIGAILI). Residues 213–218 (RSRLAQ) and A306 contribute to the (E)-cinnamate site. Residue C447 participates in heme binding.

This sequence belongs to the cytochrome P450 family. Heme serves as cofactor.

The protein localises to the membrane. It carries out the reaction (E)-cinnamate + reduced [NADPH--hemoprotein reductase] + O2 = (E)-4-coumarate + oxidized [NADPH--hemoprotein reductase] + H2O + H(+). It participates in phenylpropanoid metabolism; trans-4-coumarate biosynthesis; trans-4-coumarate from trans-cinnamate: step 1/1. Its activity is regulated as follows. Inactivated by piperonylic acid. Its function is as follows. Catalyzes the first oxidative step of the phenylpropanoid pathway in higher plants by transforming trans-cinnamate into p-coumarate. The compounds formed by this pathway are essential components for lignification, pollination, and defense against ultraviolet light, predators and pathogens. Can also use 2-naphthoic acid as substrate. This Helianthus tuberosus (Jerusalem artichoke) protein is Trans-cinnamate 4-monooxygenase.